Consider the following 200-residue polypeptide: MASLYVGDLHPEVTEAMLYEKFSPAGPILSIRICRDKITRRSLGYAYVNYQQPVDAKRALETLNFDVIKGRPVRIMWSQRDPSLRKSGVGNVFIKNLGKTIDNKALYNIFSAFGNILSCKVACDEKGPKGYGFVHFQKQESAERAIDVMNGMFLNYRKIFVGRFKSHKEREAERGAWARQSTSADVKDFEEDTDEEATLR.

2 RRM domains span residues 2-80 and 90-166; these read ASLY…WSQR and GNVF…RFKS. Residues 170–200 are disordered; the sequence is REAERGAWARQSTSADVKDFEEDTDEEATLR. Over residues 188–200 the composition is skewed to acidic residues; the sequence is DFEEDTDEEATLR.

In Homo sapiens (Human), this protein is Polyadenylate-binding protein 1-like 2 (PABPC1L2A).